The chain runs to 130 residues: Protein YchQ (130 aa).

The Periplasmic portion of the chain corresponds to 1–9 (MTSFSTLLS). Residues 10–28 (VHLISIALSVGLLTLRFWL) traverse the membrane as a helical segment. The Cytoplasmic portion of the chain corresponds to 29-39 (RYQKHPQAFAR). A helical membrane pass occupies residues 40-59 (WTRIVPPVVDTLLLLSGIAL). Topologically, residues 60-73 (MAKAHILPFSGQAQ) are periplasmic. Residues 74–93 (WLTEKLFGVIIYIVLGFIAL) form a helical membrane-spanning segment. At 94–104 (DYRRMHSQQAR) the chain is on the cytoplasmic side. Residues 105 to 124 (IIAFPLALVVLYIIIKLATT) traverse the membrane as a helical segment. The Periplasmic segment spans residues 125–130 (KVPLLG).

It belongs to the SirB2 family.

Its subcellular location is the cell inner membrane. This is Protein YchQ (ychQ) from Escherichia coli (strain K12).